The following is a 343-amino-acid chain: MSHQTGIRANEQLAKVFGKAKNGKFRVIKVSIENEQLSCGATAETKKDWERDYDKLIGPLLEKDVPCYILYRLDAKIPLGYSWLLISWTPDTASIRQKMVYASTKATLKTEFGSAYITEELHATTLDECTLEGYRRHKQDFAAPAPLTSREEELKELRKTEVHTEINTNTRHQTLGGINCPLSEATVAAVQDLVRGKHDYLQFRIDLEEEQIHVSRAAKVELADLPKQVPEDHARYHLFLFRHTHEGDYFESYVFVYSMPGYSCSVRERMMYSSCKAPFLDELAALGVEVVKKLEIDSGSELTEAFLQDELHPKKILHRPAFAKPKGPPNRGAKRLTRPTAED.

ADF-H domains follow at residues glutamate 11–arginine 135 and glutamate 184–histidine 312. Residues arginine 319 to aspartate 343 are disordered.

Belongs to the actin-binding proteins ADF family. Twinfilin subfamily. Interacts with G-actin; ADP-actin form.

It is found in the cytoplasm. The protein localises to the cytoskeleton. Its subcellular location is the cell cortex. Functionally, actin-binding protein involved in motile and morphological processes. Inhibits actin polymerization, likely by sequestering G-actin. This Drosophila melanogaster (Fruit fly) protein is Twinfilin (twf).